A 217-amino-acid chain; its full sequence is Adenylate kinase (217 aa).

11 to 16 contributes to the ATP binding site; sequence GSGKGT. The segment at 31–61 is NMP; the sequence is STGTMLRQALTRSTHKSYELHKNIMHTGDLV. Residues threonine 32, arginine 37, 59–61, 87–90, and glutamine 94 contribute to the AMP site; these read DLV and GFPR. An LID region spans residues 124 to 161; it reads GRRIHVGSGRTYHIKFNPPRNYGLDDITGEILTTRKDD. ATP is bound by residues arginine 125 and 134 to 135; that span reads TY. AMP-binding residues include arginine 158 and arginine 169. Arginine 202 serves as a coordination point for ATP.

Belongs to the adenylate kinase family. Monomer.

It is found in the cytoplasm. The catalysed reaction is AMP + ATP = 2 ADP. The protein operates within purine metabolism; AMP biosynthesis via salvage pathway; AMP from ADP: step 1/1. Functionally, catalyzes the reversible transfer of the terminal phosphate group between ATP and AMP. Plays an important role in cellular energy homeostasis and in adenine nucleotide metabolism. The polypeptide is Adenylate kinase (Blochmanniella pennsylvanica (strain BPEN)).